Consider the following 211-residue polypeptide: Imidazole glycerol phosphate synthase subunit HisH (211 aa).

The Glutamine amidotransferase type-1 domain occupies 1–211 (MIGIIDYGMG…VGIATGRGNG (211 aa)). Catalysis depends on C79, which acts as the Nucleophile. Catalysis depends on residues H186 and E188.

Heterodimer of HisH and HisF.

It localises to the cytoplasm. It carries out the reaction 5-[(5-phospho-1-deoxy-D-ribulos-1-ylimino)methylamino]-1-(5-phospho-beta-D-ribosyl)imidazole-4-carboxamide + L-glutamine = D-erythro-1-(imidazol-4-yl)glycerol 3-phosphate + 5-amino-1-(5-phospho-beta-D-ribosyl)imidazole-4-carboxamide + L-glutamate + H(+). The catalysed reaction is L-glutamine + H2O = L-glutamate + NH4(+). It functions in the pathway amino-acid biosynthesis; L-histidine biosynthesis; L-histidine from 5-phospho-alpha-D-ribose 1-diphosphate: step 5/9. In terms of biological role, IGPS catalyzes the conversion of PRFAR and glutamine to IGP, AICAR and glutamate. The HisH subunit catalyzes the hydrolysis of glutamine to glutamate and ammonia as part of the synthesis of IGP and AICAR. The resulting ammonia molecule is channeled to the active site of HisF. This is Imidazole glycerol phosphate synthase subunit HisH from Geobacillus kaustophilus (strain HTA426).